Here is a 585-residue protein sequence, read N- to C-terminus: Urease subunit alpha (585 aa).

Positions 132–585 constitute a Urease domain; the sequence is GGIDTHIHFI…LPMAQRYFLF (454 aa). Ni(2+)-binding residues include His-137, His-139, and Lys-220. At Lys-220 the chain carries N6-carboxylysine. A substrate-binding site is contributed by His-222. 2 residues coordinate Ni(2+): His-249 and His-275. His-323 serves as the catalytic Proton donor. Asp-363 provides a ligand contact to Ni(2+).

The protein belongs to the metallo-dependent hydrolases superfamily. Urease alpha subunit family. As to quaternary structure, heterotrimer of UreA (gamma), UreB (beta) and UreC (alpha) subunits. Three heterotrimers associate to form the active enzyme. Ni cation is required as a cofactor. In terms of processing, carboxylation allows a single lysine to coordinate two nickel ions.

Its subcellular location is the cytoplasm. The enzyme catalyses urea + 2 H2O + H(+) = hydrogencarbonate + 2 NH4(+). It functions in the pathway nitrogen metabolism; urea degradation; CO(2) and NH(3) from urea (urease route): step 1/1. This chain is Urease subunit alpha, found in Pseudarthrobacter chlorophenolicus (strain ATCC 700700 / DSM 12829 / CIP 107037 / JCM 12360 / KCTC 9906 / NCIMB 13794 / A6) (Arthrobacter chlorophenolicus).